Here is a 268-residue protein sequence, read N- to C-terminus: Small ribosomal subunit protein uS2 (268 aa).

Positions 161 to 179 (IPCNNDKYSIALMLWMLAR) are laminin-binding.

It belongs to the universal ribosomal protein uS2 family. Component of the small ribosomal subunit. Mature ribosomes consist of a small (40S) and a large (60S) subunit. The 40S subunit contains about 33 different proteins and 1 molecule of RNA (18S). The 60S subunit contains about 49 different proteins and 3 molecules of RNA (28S, 5.8S and 5S). Interacts with ribosomal protein S21.

It localises to the cytoplasm. Functionally, required for the assembly and/or stability of the 40S ribosomal subunit. Required for the processing of the 20S rRNA-precursor to mature 18S rRNA in a late step of the maturation of 40S ribosomal subunits. Binds laminin. The chain is Small ribosomal subunit protein uS2 (egmo3) from Echinococcus granulosus (Hydatid tapeworm).